The primary structure comprises 484 residues: Zinc metalloproteinase-disintegrin stejnitin (484 aa).

The N-terminal stretch at 1-20 (MIQVLLVTICLAVFPYQGNS) is a signal peptide. Positions 21-192 (IILESGNVND…ASQLNLTPDE (172 aa)) are excised as a propeptide. Position 193 is a pyrrolidone carboxylic acid (glutamine 193). Residues 194 to 392 (RFIELVIVAD…YTSRCLYNGP (199 aa)) form the Peptidase M12B domain. Glutamate 197 contacts Ca(2+). N-linked (GlcNAc...) asparagine glycosylation is present at asparagine 254. Aspartate 281 provides a ligand contact to Ca(2+). 3 cysteine pairs are disulfide-bonded: cysteine 305–cysteine 387, cysteine 345–cysteine 369, and cysteine 347–cysteine 352. Residues histidine 330, histidine 334, and histidine 340 each contribute to the Zn(2+) site. The Ca(2+) site is built by cysteine 387, asparagine 390, valine 402, asparagine 405, glutamate 409, glutamate 412, and aspartate 415. Residues 400–484 (PPVCGNYYVE…GDCPRNPFRA (85 aa)) enclose the Disintegrin domain. 7 disulfide bridges follow: cysteine 403/cysteine 422, cysteine 414/cysteine 432, cysteine 416/cysteine 427, cysteine 426/cysteine 449, cysteine 440/cysteine 446, cysteine 445/cysteine 470, and cysteine 458/cysteine 477. Positions 462–464 (KGD) match the Cell attachment site motif.

The protein belongs to the venom metalloproteinase (M12B) family. P-II subfamily. P-IIb sub-subfamily. The cofactor is Zn(2+). The N-terminus is blocked. Expressed by the venom gland.

Its subcellular location is the secreted. In terms of biological role, snake venom zinc metalloproteinase that inhibits ADP-induced platelet aggregation in human platelet-rich plasma (IC(50) is 175 nM) and cleaves alpha-(FGA) and subsequently the beta-chain (FGG) of bovine fibrinogen, leaving the gamma-chain unaffected. It is also able to inhibit proliferatin of ECV304 cells by inducing apoptosis of these cells. The polypeptide is Zinc metalloproteinase-disintegrin stejnitin (Trimeresurus stejnegeri (Chinese green tree viper)).